The primary structure comprises 342 residues: Protein pelota homolog (342 aa).

This sequence belongs to the eukaryotic release factor 1 family. Pelota subfamily. Monomer. Requires a divalent metal cation as cofactor.

It is found in the cytoplasm. In terms of biological role, may function in recognizing stalled ribosomes, interact with stem-loop structures in stalled mRNA molecules, and effect endonucleolytic cleavage of the mRNA. May play a role in the release non-functional ribosomes and degradation of damaged mRNAs. Has endoribonuclease activity. The chain is Protein pelota homolog from Methanocorpusculum labreanum (strain ATCC 43576 / DSM 4855 / Z).